A 666-amino-acid polypeptide reads, in one-letter code: uncharacterized protein (666 aa).

This is an uncharacterized protein from Invertebrate iridescent virus 6 (IIV-6).